The chain runs to 369 residues: Protein VP6 (369 aa).

The tract at residues 20–208 is disordered; that stretch reads LEQRSIAPLL…EEAKVGGGDR (189 aa). A compositionally biased stretch (basic and acidic residues) spans 29–66; the sequence is LREKNSTEAKSKLKEDGEKKNKSEKEENKIHDDRRVES. Gly residues-rich tracts occupy residues 92–111 and 162–171; these read TGGG…GGVG and TSGGLQGRGG. A compositionally biased stretch (basic and acidic residues) spans 196-208; sequence TEGEEAKVGGGDR.

It belongs to the orbivirus VP6 family.

It is found in the virion. This African horse sickness virus 3 (AHSV-3) protein is Protein VP6 (S9).